The primary structure comprises 59 residues: Large ribosomal subunit protein bL32 (59 aa).

The protein belongs to the bacterial ribosomal protein bL32 family.

The polypeptide is Large ribosomal subunit protein bL32 (Polynucleobacter necessarius subsp. necessarius (strain STIR1)).